A 691-amino-acid chain; its full sequence is DNA-directed RNA polymerase subunit beta' (691 aa).

Zn(2+)-binding residues include Cys76, Cys78, Cys94, and Cys97. Residues Asp496, Asp498, and Asp500 each coordinate Mg(2+).

Belongs to the RNA polymerase beta' chain family. RpoC1 subfamily. Mg(2+) is required as a cofactor. It depends on Zn(2+) as a cofactor.

Its subcellular location is the plastid. It carries out the reaction RNA(n) + a ribonucleoside 5'-triphosphate = RNA(n+1) + diphosphate. DNA-dependent RNA polymerase catalyzes the transcription of DNA into RNA using the four ribonucleoside triphosphates as substrates. In Cuscuta exaltata (Tall dodder), this protein is DNA-directed RNA polymerase subunit beta'.